The primary structure comprises 467 residues: Cilia- and flagella-associated protein 97 (467 aa).

4 disordered regions span residues methionine 1–serine 20, isoleucine 76–proline 235, arginine 336–glutamine 370, and alanine 412–glutamine 467. Acidic residues predominate over residues aspartate 124–glutamate 135. Polar residues predominate over residues aspartate 162 to threonine 177. Residues aspartate 180–serine 194 are compositionally biased toward low complexity. The span at serine 198–glutamate 216 shows a compositional bias: basic and acidic residues. The segment covering threonine 223–proline 235 has biased composition (polar residues). A coiled-coil region spans residues lysine 310–lysine 387. Over residues serine 421–serine 439 the composition is skewed to low complexity.

The protein belongs to the CFAP97 family.

The chain is Cilia- and flagella-associated protein 97 from Xenopus tropicalis (Western clawed frog).